The sequence spans 378 residues: Putative UDP-N-acetylglucosamine 2-epimerase (378 aa).

The protein belongs to the UDP-N-acetylglucosamine 2-epimerase family.

The protein localises to the cytoplasm. The enzyme catalyses UDP-N-acetyl-alpha-D-glucosamine = UDP-N-acetyl-alpha-D-mannosamine. The sequence is that of Putative UDP-N-acetylglucosamine 2-epimerase from Thermotoga maritima (strain ATCC 43589 / DSM 3109 / JCM 10099 / NBRC 100826 / MSB8).